Reading from the N-terminus, the 145-residue chain is Androgenic gland hormone (145 aa).

The signal sequence occupies residues 1-21 (MKGLLFIVSLLCLTLHQRVWA). 4 disulfide bridges follow: C33/C122, C42/C59, C44/C140, and C123/C131. The propeptide at 68–112 (SADDEDYLFEEDEDDEFFHPRALSPPAAKSGDERLEDEVSFHSRS) is c peptide. Residue N132 is glycosylated (N-linked (GlcNAc...) asparagine).

In terms of tissue distribution, androgenic gland.

Its subcellular location is the secreted. Controls sex differentiation and the formation of male appendages, spermatogenesis, pigmentation, and male specific behavior. The protein is Androgenic gland hormone (AGH) of Porcellio scaber (Common rough woodlouse).